A 208-amino-acid chain; its full sequence is Ribosomal RNA small subunit methyltransferase G (208 aa).

S-adenosyl-L-methionine contacts are provided by residues Gly76, Leu81, 127–128, and Arg142; that span reads VE.

This sequence belongs to the methyltransferase superfamily. RNA methyltransferase RsmG family.

It localises to the cytoplasm. It catalyses the reaction guanosine(527) in 16S rRNA + S-adenosyl-L-methionine = N(7)-methylguanosine(527) in 16S rRNA + S-adenosyl-L-homocysteine. Specifically methylates the N7 position of guanine in position 527 of 16S rRNA. This is Ribosomal RNA small subunit methyltransferase G from Legionella pneumophila (strain Lens).